Here is a 191-residue protein sequence, read N- to C-terminus: Cell division protein SepF (191 aa).

Residues 157 to 178 show a composition bias toward polar residues; that stretch reads YLNESPAQPVQTTTSFGRTATP. The interval 157–191 is disordered; the sequence is YLNESPAQPVQTTTSFGRTATPTPAWGTDSRYAAQ.

It belongs to the SepF family. In terms of assembly, homodimer. Interacts with FtsZ.

The protein localises to the cytoplasm. Its function is as follows. Cell division protein that is part of the divisome complex and is recruited early to the Z-ring. Probably stimulates Z-ring formation, perhaps through the cross-linking of FtsZ protofilaments. Its function overlaps with FtsA. This is Cell division protein SepF from Synechococcus elongatus (strain ATCC 33912 / PCC 7942 / FACHB-805) (Anacystis nidulans R2).